The sequence spans 705 residues: Protein artemis (705 aa).

T380 is subject to Phosphothreonine. At S385 the chain carries Phosphoserine. Residues 451-462 (EESNSDSGEELE) show a composition bias toward acidic residues. Disordered regions lie at residues 451-484 (EESN…NADP), 535-569 (PKLC…GWDS), and 638-675 (TLSG…AELP). A compositionally biased stretch (low complexity) spans 546–559 (THISSQNSSQSTHI). Over residues 560–569 (TDQGSQGWDS) the composition is skewed to polar residues. A compositionally biased stretch (low complexity) spans 652 to 662 (SSTRADSQSSS). Residue S658 is modified to Phosphoserine; by ATM.

It belongs to the DNA repair metallo-beta-lactamase (DRMBL) family. As to quaternary structure, interacts with LIG4; the interaction is direct. Interacts with ATM. Interacts with BRCA1. Interacts with PRKDC. Interacts with TP53BP1. Also exhibits ATM- and phosphorylation-dependent interaction with the MRN complex, composed of MRE11, RAD50, and NBN. Phosphorylation on undefined residues by PRKDC may stimulate endonucleolytic activity on 5' and 3' hairpins and overhangs. PRKDC must remain present, even after phosphorylation, for efficient hairpin opening. Also phosphorylated by ATM in response to ionizing radiation (IR) and by ATR in response to ultraviolet (UV) radiation.

It is found in the nucleus. Required for V(D)J recombination, the process by which exons encoding the antigen-binding domains of immunoglobulins and T-cell receptor proteins are assembled from individual V, (D), and J gene segments. V(D)J recombination is initiated by the lymphoid specific RAG endonuclease complex, which generates site specific DNA double strand breaks (DSBs). These DSBs present two types of DNA end structures: hairpin sealed coding ends and phosphorylated blunt signal ends. These ends are independently repaired by the non homologous end joining (NHEJ) pathway to form coding and signal joints respectively. This protein likely exhibits single-strand specific 5'-3' exonuclease activity in isolation, and may acquire endonucleolytic activity on 5' and 3' hairpins and overhangs when in a complex with PRKDC. The latter activity may be required specifically for the resolution of closed hairpins prior to the formation of the coding joint. May also be required for the repair of complex DSBs induced by ionizing radiation, which require substantial end-processing prior to religation by NHEJ. The sequence is that of Protein artemis (Dclre1c) from Mus musculus (Mouse).